We begin with the raw amino-acid sequence, 728 residues long: 1,4-alpha-glucan branching enzyme GlgB (728 aa).

The active-site Nucleophile is the aspartate 405. The active-site Proton donor is the glutamate 458.

The protein belongs to the glycosyl hydrolase 13 family. GlgB subfamily. Monomer.

It carries out the reaction Transfers a segment of a (1-&gt;4)-alpha-D-glucan chain to a primary hydroxy group in a similar glucan chain.. It participates in glycan biosynthesis; glycogen biosynthesis. Functionally, catalyzes the formation of the alpha-1,6-glucosidic linkages in glycogen by scission of a 1,4-alpha-linked oligosaccharide from growing alpha-1,4-glucan chains and the subsequent attachment of the oligosaccharide to the alpha-1,6 position. In Escherichia coli O6:K15:H31 (strain 536 / UPEC), this protein is 1,4-alpha-glucan branching enzyme GlgB.